Reading from the N-terminus, the 154-residue chain is Ribosomal RNA large subunit methyltransferase H (154 aa).

An S-adenosyl-L-methionine-binding site is contributed by Gly-102.

The protein belongs to the RNA methyltransferase RlmH family. In terms of assembly, homodimer.

Its subcellular location is the cytoplasm. The enzyme catalyses pseudouridine(1915) in 23S rRNA + S-adenosyl-L-methionine = N(3)-methylpseudouridine(1915) in 23S rRNA + S-adenosyl-L-homocysteine + H(+). Specifically methylates the pseudouridine at position 1915 (m3Psi1915) in 23S rRNA. The protein is Ribosomal RNA large subunit methyltransferase H of Caulobacter sp. (strain K31).